The chain runs to 247 residues: Small ribosomal subunit protein uS2 (247 aa).

The protein belongs to the universal ribosomal protein uS2 family.

The polypeptide is Small ribosomal subunit protein uS2 (Cupriavidus pinatubonensis (strain JMP 134 / LMG 1197) (Cupriavidus necator (strain JMP 134))).